Reading from the N-terminus, the 284-residue chain is Gap junction beta-1 protein (284 aa).

The Cytoplasmic segment spans residues 1-22 (MNWTGLYTLLSGVNRHSTAIGR). Residues 23–45 (VWLSVIFIFRIMVLVVAAESVWG) form a helical membrane-spanning segment. At 46–75 (DEKSSFICNTLQPGCNSVCYDHFFPISHVR) the chain is on the extracellular side. A helical transmembrane segment spans residues 76–95 (LWSLQLILVSTPALLVAMHV). Topologically, residues 96–130 (AHQQHIEKKMLRLEGHGDPLHLEEVKRHKVHISGT) are cytoplasmic. The chain crosses the membrane as a helical span at residues 131–153 (LWWTYVISVVFRLLFEAAFMYVF). Topologically, residues 154–191 (YLLYPGYAMVRLVKCDAYPCPNTVDCFVSRPTEKTIFT) are extracellular. The helical transmembrane segment at 192 to 214 (VFMLAASGICIILNVAEVVYLIF) threads the bilayer. At 215–284 (RACARRAQRR…AEKSDRCSAC (70 aa)) the chain is on the cytoplasmic side. Phosphoserine occurs at positions 233, 259, 267, and 278.

It belongs to the connexin family. Beta-type (group I) subfamily. As to quaternary structure, a connexon is composed of a hexamer of connexins. Interacts with CNST.

Its subcellular location is the cell membrane. The protein resides in the cell junction. It localises to the gap junction. In terms of biological role, one gap junction consists of a cluster of closely packed pairs of transmembrane channels, the connexons, through which materials of low MW diffuse from one cell to a neighboring cell. This is Gap junction beta-1 protein (GJB1) from Bos taurus (Bovine).